The sequence spans 218 residues: GTP cyclohydrolase 1 (218 aa).

Zn(2+) contacts are provided by Cys-109, His-112, and Cys-180.

This sequence belongs to the GTP cyclohydrolase I family. Toroid-shaped homodecamer, composed of two pentamers of five dimers.

It carries out the reaction GTP + H2O = 7,8-dihydroneopterin 3'-triphosphate + formate + H(+). The protein operates within cofactor biosynthesis; 7,8-dihydroneopterin triphosphate biosynthesis; 7,8-dihydroneopterin triphosphate from GTP: step 1/1. This chain is GTP cyclohydrolase 1, found in Aeromonas hydrophila subsp. hydrophila (strain ATCC 7966 / DSM 30187 / BCRC 13018 / CCUG 14551 / JCM 1027 / KCTC 2358 / NCIMB 9240 / NCTC 8049).